We begin with the raw amino-acid sequence, 250 residues long: Triosephosphate isomerase (250 aa).

Position 9–11 (9–11 (NWK)) interacts with substrate. The active-site Electrophile is the histidine 95. Glutamate 167 acts as the Proton acceptor in catalysis. Residues glycine 173, serine 213, and 234–235 (GG) contribute to the substrate site.

Belongs to the triosephosphate isomerase family. As to quaternary structure, homodimer.

The protein resides in the cytoplasm. It carries out the reaction D-glyceraldehyde 3-phosphate = dihydroxyacetone phosphate. It participates in carbohydrate biosynthesis; gluconeogenesis. Its pathway is carbohydrate degradation; glycolysis; D-glyceraldehyde 3-phosphate from glycerone phosphate: step 1/1. Involved in the gluconeogenesis. Catalyzes stereospecifically the conversion of dihydroxyacetone phosphate (DHAP) to D-glyceraldehyde-3-phosphate (G3P). This is Triosephosphate isomerase from Flavobacterium psychrophilum (strain ATCC 49511 / DSM 21280 / CIP 103535 / JIP02/86).